Reading from the N-terminus, the 85-residue chain is Alpha-conotoxin Lt28.1 (85 aa).

Positions 1-21 are cleaved as a signal peptide; sequence MPKLEMMLLVLLILPLCYIDA. The propeptide occupies 22–40; that stretch reads VGPPPPWNMEDEIIEHWQK. 4 cysteine pairs are disulfide-bonded: Cys-61/Cys-74, Cys-66/Cys-84, Cys-67/Cys-79, and Cys-72/Cys-81.

This sequence belongs to the conotoxin D superfamily. Expressed by the venom duct.

Its subcellular location is the secreted. Its function is as follows. Alpha-conotoxins act on postsynaptic membranes, they bind to the nicotinic acetylcholine receptors (nAChR) and thus inhibit them. This toxin weakly inhibits alpha-9-alpha-10/CHRNA9-CHRNA10 nAChRs (IC(50)=3 uM). This is Alpha-conotoxin Lt28.1 from Conus litteratus (Lettered cone).